Reading from the N-terminus, the 131-residue chain is Cystatin-like cysteine protease inhibitor EPIC3 (131 aa).

An N-terminal signal peptide occupies residues 1 to 22; that stretch reads MAFTRSIALFAGLALAASSAQG. The N-linked (GlcNAc...) asparagine glycan is linked to N33. Positions 71–75 match the Secondary area of contact motif; sequence QTVAG.

This sequence belongs to the cystatin family.

Its subcellular location is the secreted. In terms of biological role, secreted effector that interacts with and inhibits host apoplastic pathogenesis-related papain-like cysteine proteases. Inhibition of host proteases by a pathogen extracellular protease inhibitor forms a specific type of defense-counterdefense mechanism between plants and microbial pathogens. This chain is Cystatin-like cysteine protease inhibitor EPIC3, found in Phytophthora infestans (strain T30-4) (Potato late blight agent).